The chain runs to 898 residues: Coiled-coil domain-containing protein 186 (898 aa).

Disordered regions lie at residues 1–43 (MSET…NESK), 68–95 (NYIP…QIAN), and 702–749 (RRKL…SSVA). S2 is modified (N-acetylserine). Polar residues predominate over residues 82–95 (KTDTGSENSEQIAN). Positions 201–712 (KYLQQEHIIK…RKLDQVESGS (512 aa)) form a coiled coil. The span at 703 to 717 (RKLDQVESGSYDKEV) shows a compositional bias: basic and acidic residues. Low complexity predominate over residues 718–734 (SSMGSRSSSSGSLNARS). S740 is subject to Phosphoserine. Coiled-coil stretches lie at residues 759 to 803 (AMLI…IQSY) and 855 to 894 (KLQA…LEQR).

This chain is Coiled-coil domain-containing protein 186 (CCDC186), found in Homo sapiens (Human).